A 139-amino-acid polypeptide reads, in one-letter code: 6,7-dimethyl-8-ribityllumazine synthase (139 aa).

Residues F11, 42 to 44 (ALE), and 66 to 68 (VVI) contribute to the 5-amino-6-(D-ribitylamino)uracil site. Residue 71-72 (ET) participates in (2S)-2-hydroxy-3-oxobutyl phosphate binding. H74 (proton donor) is an active-site residue. N98 contributes to the 5-amino-6-(D-ribitylamino)uracil binding site. R112 serves as a coordination point for (2S)-2-hydroxy-3-oxobutyl phosphate.

Belongs to the DMRL synthase family.

It carries out the reaction (2S)-2-hydroxy-3-oxobutyl phosphate + 5-amino-6-(D-ribitylamino)uracil = 6,7-dimethyl-8-(1-D-ribityl)lumazine + phosphate + 2 H2O + H(+). Its pathway is cofactor biosynthesis; riboflavin biosynthesis; riboflavin from 2-hydroxy-3-oxobutyl phosphate and 5-amino-6-(D-ribitylamino)uracil: step 1/2. Functionally, catalyzes the formation of 6,7-dimethyl-8-ribityllumazine by condensation of 5-amino-6-(D-ribitylamino)uracil with 3,4-dihydroxy-2-butanone 4-phosphate. This is the penultimate step in the biosynthesis of riboflavin. The chain is 6,7-dimethyl-8-ribityllumazine synthase from Novosphingobium aromaticivorans (strain ATCC 700278 / DSM 12444 / CCUG 56034 / CIP 105152 / NBRC 16084 / F199).